Reading from the N-terminus, the 360-residue chain is DNA replication and repair protein RecF (360 aa).

30–37 (GQNGSGKT) contacts ATP.

The protein belongs to the RecF family.

Its subcellular location is the cytoplasm. In terms of biological role, the RecF protein is involved in DNA metabolism; it is required for DNA replication and normal SOS inducibility. RecF binds preferentially to single-stranded, linear DNA. It also seems to bind ATP. The protein is DNA replication and repair protein RecF of Shewanella putrefaciens (strain CN-32 / ATCC BAA-453).